The sequence spans 86 residues: Muscarinic toxin 38 (86 aa).

The N-terminal stretch at methionine 1 to threonine 21 is a signal peptide. 4 cysteine pairs are disulfide-bonded: cysteine 24-cysteine 45, cysteine 38-cysteine 63, cysteine 67-cysteine 78, and cysteine 79-cysteine 84.

The protein belongs to the three-finger toxin family. Short-chain subfamily. Aminergic toxin sub-subfamily. As to quaternary structure, monomer. Expressed by the venom gland.

It localises to the secreted. Functionally, binds to the muscarinic acetylcholine receptor (CHRM). The sequence is that of Muscarinic toxin 38 from Ophiophagus hannah (King cobra).